Reading from the N-terminus, the 486-residue chain is Inosine-5'-monophosphate dehydrogenase (486 aa).

2 CBS domains span residues I99–E154 and M156–E215. NAD(+) contacts are provided by residues D247 and G294–G296. Positions 296 and 298 each coordinate K(+). S299 serves as a coordination point for IMP. Position 301 (C301) interacts with K(+). Residue C301 is the Thioimidate intermediate of the active site. Residues D334 to G336, G357 to N358, and Y381 to G385 contribute to the IMP site. R397 serves as the catalytic Proton acceptor. E412 lines the IMP pocket. Residues E466, S467, and H468 each contribute to the K(+) site.

It belongs to the IMPDH/GMPR family. In terms of assembly, homotetramer. K(+) serves as cofactor.

It carries out the reaction IMP + NAD(+) + H2O = XMP + NADH + H(+). It functions in the pathway purine metabolism; XMP biosynthesis via de novo pathway; XMP from IMP: step 1/1. With respect to regulation, mycophenolic acid (MPA) is a non-competitive inhibitor that prevents formation of the closed enzyme conformation by binding to the same site as the amobile flap. In contrast, mizoribine monophosphate (MZP) is a competitive inhibitor that induces the closed conformation. MPA is a potent inhibitor of mammalian IMPDHs but a poor inhibitor of the bacterial enzymes. MZP is a more potent inhibitor of bacterial IMPDH. Functionally, catalyzes the conversion of inosine 5'-phosphate (IMP) to xanthosine 5'-phosphate (XMP), the first committed and rate-limiting step in the de novo synthesis of guanine nucleotides, and therefore plays an important role in the regulation of cell growth. This Pyrococcus horikoshii (strain ATCC 700860 / DSM 12428 / JCM 9974 / NBRC 100139 / OT-3) protein is Inosine-5'-monophosphate dehydrogenase.